The sequence spans 1101 residues: MQSLAEVSAPDAASVATAEELATLKQRMDEALALLKRAKLGGSERRNLYELPWYVIIGPPGSGKTTALMNSGLDFPLAAQMGAGAIRGVGGTRNCDWWFTDEAVLLDTAGRYTTQDSHAQVDKAAWLGFLDLLKTQRKRRPIDGAFIAISLSDLLLGSDAERAAHAQAIRARIQELYQQLGVRFPIYVMLTKFDLVPGFMEFFDSLNREERAQVWGMTFALDDGKSAEGPLAVFDSEFALLEQRLTARLVERLQQERDPARRDLVYGFPQQFAALRECLGEFLNGVFKPNPYEERPLLRGLYFTSGTQEGSPIDRLIGSMAQSMNLDRQHLARQTGTGRSYFIERLFREVAFGERGLVGTNPKVERRRKWLTIGALSATALVVLAVTAVWIASYRANQSYIAAVDQRVDPLARGIESLSPAQRDVLAVLPQLNAVQNLAGDAPSWAEGYGLYQGDMLGEESASVYRKLLIAVFAPRLVTRIEEQLRSGGSSDFLYEGLKAYLMLGSPDHYDADFIKAWISLDWERNLPRDLSPEQRQALHAHLDALLERRPPSARLDQDLVEDLRRQLQQLPVAQRVYDRVKRQRLPKDVPDFRISDAAGRDAPLVFARKSGKPLTDPLSGFFTYRGYREVFLTASLSQAGTIAEEQWVLGRDLNDAGDAANLALDVRRLYFQDYLRQWDDLLADLTVVPITNVTQAADVLRILSGPTSPFRKLLEAVARETDLQKGDRLVAAQVKKAADGTVDKLKQRLGSLVGQEEEGAREQPRQVDSDPISAHFAELNSLVSKGEGGNEPAPIDSLLEDMNALYVQVSAMAGASGDSLLGDAKNQVAAAASRVALSAERQPPVVQGLVKNVVNSTTSSMMGSVRNQLNAAWISDVVSVYRQSLAGRYPIAAGSSRDATLEDFGHFFGAGGVMDSYFRQYLQPYVDTSASTWRWQPGAAQKLGINPGVLHTFQRAAAIRDAFFRSGGMQPTVRFELKPVTMDAAISQFILDLDGQQLTYDHGPSRPVAMQWPSANGLGVVRLTVTPPPSSGRSGLTLEGPWAWFRLLDQSDLERGNSPDRFTLRLRIDGSSIACELRASSAFNPFKSRVVSGFSLPERL.

A helical membrane pass occupies residues 371–391 (LTIGALSATALVVLAVTAVWI).

It localises to the cell inner membrane. In terms of biological role, core component of the type VI (T6SS) secretion system that plays a role in the release of toxins targeting both eukaryotic and prokaryotic species. Plays an essential role in stabilization of assembled TssK1 structure at a fixed perimembrane site. The sequence is that of Type VI secretion system component TssM1 from Pseudomonas aeruginosa (strain ATCC 15692 / DSM 22644 / CIP 104116 / JCM 14847 / LMG 12228 / 1C / PRS 101 / PAO1).